Consider the following 725-residue polypeptide: Gamma-tubulin complex component 5 (725 aa).

The disordered stretch occupies residues 222-246 (TENEEKMSDNASASSGSDQGPSSRQ). Residues 232-244 (ASASSGSDQGPSS) show a composition bias toward low complexity.

Belongs to the TUBGCP family. In terms of assembly, component of the gamma-tubulin ring complex (gTuRC) consisting of TUBGCP2, TUBGCP3, TUBGCP4, TUBGCP5 and TUBGCP6 and gamma-tubulin TUBG1 or TUBG2. TUBGCP2, TUBGCP3, TUBGCP4, TUBGCP5 and TUBGCP6 assemble in a 5:5:2:1:1 stoichiometry; each is associated with a gamma-tubulin, thereby arranging 14 gamma-tubulins in a helical manner. Gamma-tubulin at the first position is blocked by TUBGCP3 at the last position, allowing 13 protafilaments to grow into a microtubule. The gTuRC (via TUBGCP3 and TUBGCP6) interacts with ACTB and MZT1; the interactions form a luminal bridge that stabilizes the initial structure during complex assembly. The gTuRC (via TUBGCP2) interacts with MZT2A/MZT2B and CDK5RAP2 (via CM1 motif); the interactions play a role in gTuRC activation.

It is found in the cytoplasm. Its subcellular location is the cytoskeleton. The protein resides in the microtubule organizing center. It localises to the centrosome. Functionally, component of the gamma-tubulin ring complex (gTuRC) which mediates microtubule nucleation. The gTuRC regulates the minus-end nucleation of alpha-beta tubulin heterodimers that grow into microtubule protafilaments, a critical step in centrosome duplication and spindle formation. This is Gamma-tubulin complex component 5 (TUBGCP5) from Macaca fascicularis (Crab-eating macaque).